The primary structure comprises 215 residues: Chaperone protein TorD (215 aa).

The protein belongs to the TorD/DmsD family. TorD subfamily.

The protein resides in the cytoplasm. Functionally, involved in the biogenesis of TorA. Acts on TorA before the insertion of the molybdenum cofactor and, as a result, probably favors a conformation of the apoenzyme that is competent for acquiring the cofactor. The sequence is that of Chaperone protein TorD from Aliivibrio fischeri (strain ATCC 700601 / ES114) (Vibrio fischeri).